A 543-amino-acid polypeptide reads, in one-letter code: MESASPAPAQAGDPALARDVKKRRTFAIISHPDAGKTTLTEKLLLFGGAIQMAGTVKAKKSGKFATSDWMAVEQERGISVASSVMQFSYGDCVFNLLDTPGHKDFSEDTYRVLTAVDAAIMVVDAAKGVEEQTIKLLEVCRLRDTPIITFINKLDREVREPLELLDEIESILKIHCAPVTWPIGMGKRFQGVYHLIHDEILRFKAGEENAGQQFESLQGLGDAKLRELFPLEADALLSEIELVRGAGAAFDLADFLAGRQTPVFFGSGINNFGVREVLRALSDWAPSPLPRDAVERTVEPTEPKFTGFVFKIQANMDPQHRDRIAFFRVCSGRYSPGMKVRHRRTGKDMKIANAVVFMANERQRSDDAVAGDIIGIHNHGQLQIGDTLTEGEALQFKGIPYFAPELFSKPRLRDPLRAKQLNKGLLELGEEGAVQVFEPFADNTLLIGAVGPLQFEIVAHRLKTEYGVDASFENAGIHTARWVTCPDAQHLAEFTKANSLRLAKDVDGNLVYLADTRVNLTLAQERWPKVAFHDTREHGQLLT.

In terms of domain architecture, tr-type G spans 21–289 (KKRRTFAIIS…ALSDWAPSPL (269 aa)). GTP is bound by residues 30 to 37 (SHPDAGKT), 98 to 102 (DTPGH), and 152 to 155 (NKLD).

Belongs to the TRAFAC class translation factor GTPase superfamily. Classic translation factor GTPase family. PrfC subfamily.

Its subcellular location is the cytoplasm. In terms of biological role, increases the formation of ribosomal termination complexes and stimulates activities of RF-1 and RF-2. It binds guanine nucleotides and has strong preference for UGA stop codons. It may interact directly with the ribosome. The stimulation of RF-1 and RF-2 is significantly reduced by GTP and GDP, but not by GMP. This Thiobacillus denitrificans (strain ATCC 25259 / T1) protein is Peptide chain release factor 3.